Here is a 737-residue protein sequence, read N- to C-terminus: Delta and Notch-like epidermal growth factor-related receptor (737 aa).

The N-terminal stretch at 1–34 (MQPRRAQAPGAQLLPALALLLLLLGAGPRGSSLA) is a signal peptide. Over 35–640 (NPVPAAPLSA…LTNMPRHSLY (606 aa)) the chain is Extracellular. EGF-like domains are found at residues 44–92 (APGP…ANCQ) and 94–133 (VADP…PNCE). Residues 44-133 (APGPCAAQPC…NEGYEGPNCE (90 aa)) form an interaction with NOTCH1 region. 6 disulfide bridges follow: C48–C59, C53–C80, C82–C91, C98–C108, C103–C121, and C123–C132. N-linked (GlcNAc...) asparagine glycosylation occurs at N223. EGF-like domains are found at residues 309–348 (PGES…TFCE), 349–390 (EYDA…ELCQ), 392–428 (KIDY…SACE), 430–466 (KVDP…PTCA), and 468–503 (LIDF…LYCE). Intrachain disulfides connect C319-C336, C338-C347, C353-C364, C358-C378, C380-C389, C396-C407, C401-C416, C418-C427, C434-C445, C439-C454, C456-C465, C472-C482, C477-C491, C493-C502, C509-C520, C514-C529, C531-C540, C547-C558, C552-C567, C569-C578, C585-C596, C590-C605, and C607-C616. One can recognise an EGF-like 8; calcium-binding domain in the interval 505–541 (EYNECLSAPCLNAATCRDLVNGYECVCLAEYKGTHCE). In terms of domain architecture, EGF-like 9 spans 543–579 (YKDPCANVSCLNGATCDSDGLNGTCICAPGFTGEECD). In terms of domain architecture, Follistatin-like spans 546–568 (PCANVSCLNGATCDSDGLNGTCI). The N-linked (GlcNAc...) asparagine glycan is linked to N564. Residues 581–617 (DINECDSNPCHHGGSCLDQPNGYNCHCPHGWVGANCE) enclose the EGF-like 10; calcium-binding domain. Residues 641–661 (IIIGALCVAFILMLIILIVGI) form a helical membrane-spanning segment. Residues 662 to 737 (CRISRIEYQG…LVTLIKTKDL (76 aa)) lie on the Cytoplasmic side of the membrane. The tract at residues 677–680 (YEEF) is interaction with AP1G1 and somatodendritic targeting. S685 bears the Phosphoserine mark. Phosphotyrosine occurs at positions 711 and 721. S722 is subject to Phosphoserine.

Interacts with AP1G1. Interacts with NOTCH1. As to expression, expressed in brain, spinal cord and adrenal gland.

The protein localises to the cell membrane. Functionally, activator of the NOTCH1 pathway. May mediate neuron-glia interaction during astrocytogenesis. This chain is Delta and Notch-like epidermal growth factor-related receptor (DNER), found in Homo sapiens (Human).